Here is a 451-residue protein sequence, read N- to C-terminus: uncharacterized protein (451 aa).

The first 18 residues, 1–18, serve as a signal peptide directing secretion; the sequence is MRTRITLALAVLLLLLAG. Cysteine 19 carries N-palmitoyl cysteine lipidation. Cysteine 19 is lipidated: S-diacylglycerol cysteine. The disordered stretch occupies residues 424–451; it reads TSADPPPGVPRAGKRNIRDATSRLPSTP.

The protein localises to the cell membrane. Its function is as follows. May participate in oleandomycin glycosylation and secretion during antibiotic production. This is an uncharacterized protein from Streptomyces antibioticus.